The sequence spans 275 residues: Galaxin-2 (275 aa).

The first 20 residues, 1–20, serve as a signal peptide directing secretion; that stretch reads MTRFTSIGLCAVLLFNVCSC.

As to expression, component of the acid-insoluble and acid-soluble organic matrix of the aragonitic skeleton (at protein level).

Its subcellular location is the secreted. The protein is Galaxin-2 of Acropora millepora (Staghorn coral).